Here is a 185-residue protein sequence, read N- to C-terminus: MIQYRGGYIASCYAQALFSVSSNVNSICKNAEFVVSVLENCNDISLFLSNPRVSREDKVKLVEVIGDYIDSILVKFIMVVIENNRGNILLQILNTFLDLVKKHNREVSISVTSCAVLTKQEEEGICDALFEKYGKVVSITNNIDPSILGGFIIRVNFDVIDVSLNSYLQSLRELSKMAIRSSISE.

Belongs to the ATPase delta chain family. As to quaternary structure, F-type ATPases have 2 components, F(1) - the catalytic core - and F(0) - the membrane proton channel. F(1) has five subunits: alpha(3), beta(3), gamma(1), delta(1), epsilon(1). F(0) has three main subunits: a(1), b(2) and c(10-14). The alpha and beta chains form an alternating ring which encloses part of the gamma chain. F(1) is attached to F(0) by a central stalk formed by the gamma and epsilon chains, while a peripheral stalk is formed by the delta and b chains.

It localises to the cell inner membrane. Its function is as follows. F(1)F(0) ATP synthase produces ATP from ADP in the presence of a proton or sodium gradient. F-type ATPases consist of two structural domains, F(1) containing the extramembraneous catalytic core and F(0) containing the membrane proton channel, linked together by a central stalk and a peripheral stalk. During catalysis, ATP synthesis in the catalytic domain of F(1) is coupled via a rotary mechanism of the central stalk subunits to proton translocation. This protein is part of the stalk that links CF(0) to CF(1). It either transmits conformational changes from CF(0) to CF(1) or is implicated in proton conduction. The chain is ATP synthase subunit delta from Ehrlichia chaffeensis (strain ATCC CRL-10679 / Arkansas).